Reading from the N-terminus, the 384-residue chain is Deoxyguanosinetriphosphate triphosphohydrolase-like protein (384 aa).

An HD domain is found at 62–198; sequence RLTHSLEVST…AALADDISYI (137 aa).

Belongs to the dGTPase family. Type 2 subfamily.

The polypeptide is Deoxyguanosinetriphosphate triphosphohydrolase-like protein (Rickettsia conorii (strain ATCC VR-613 / Malish 7)).